A 254-amino-acid chain; its full sequence is Phosphomannomutase (254 aa).

The active-site Nucleophile is Asp-19. Mg(2+) contacts are provided by Asp-19 and Asp-21. Asp-21 functions as the Proton donor/acceptor in the catalytic mechanism. Alpha-D-mannose 1-phosphate-binding residues include Arg-28, Arg-130, Arg-141, Arg-148, Ser-186, and Asp-188. Positions 216, 228, 230, and 233 each coordinate Mg(2+). Residue Ser-240 is modified to Phosphoserine.

Belongs to the eukaryotic PMM family. In terms of assembly, homodimer.

It is found in the cytoplasm. The catalysed reaction is alpha-D-mannose 1-phosphate = D-mannose 6-phosphate. Its pathway is nucleotide-sugar biosynthesis; GDP-alpha-D-mannose biosynthesis; alpha-D-mannose 1-phosphate from D-fructose 6-phosphate: step 2/2. In terms of biological role, involved in the synthesis of the GDP-mannose and dolichol-phosphate-mannose required for a number of critical mannosyl transfer reactions such as folding and glycosylation of secretory proteins in the ER lumen. The protein is Phosphomannomutase of Saccharomyces cerevisiae (strain ATCC 204508 / S288c) (Baker's yeast).